We begin with the raw amino-acid sequence, 419 residues long: N-acylneuraminate cytidylyltransferase (419 aa).

Belongs to the CMP-NeuNAc synthase family. In terms of assembly, monomer. May form aggregates. Mg(2+) is required as a cofactor. The cofactor is Mn(2+).

It is found in the cytoplasm. The catalysed reaction is an N-acylneuraminate + CTP = a CMP-N-acyl-beta-neuraminate + diphosphate. Inhibited by the CTP analogs 5-mercuri-CTP and CTP-2',3'-dialdehyde. Its function is as follows. Catalyzes the formation of CMP-N-acetylneuraminic acid (CMP-NeuNAc), which is essential for the formation of the capsule. In Escherichia coli O18:K1:H7 (strain RS218 / NMEC), this protein is N-acylneuraminate cytidylyltransferase (neuA).